A 143-amino-acid chain; its full sequence is MTDMATGNAPELLVELTADIVAAYVSNHVVPVSDLANLISDVHSALSNTSVPQPAAAVVEKQKPAVSVRKSVQDEQITCLECGGNFKSLKRHLMTHHSLSPEEYREKWDLPTDYPMVAPAYAEARSRLAKEMGLGQRRKRGRG.

The C2H3-type zinc finger occupies 79–97 (CLECGGNFKSLKRHLMTHH).

It belongs to the ros/MucR family.

The sequence is that of Transcriptional regulatory protein RosR (rosR) from Rhizobium etli (strain ATCC 51251 / DSM 11541 / JCM 21823 / NBRC 15573 / CFN 42).